Consider the following 62-residue polypeptide: Small ribosomal subunit protein eS27 (62 aa).

The Zn(2+) site is built by C17, C20, C36, and C39. Residues 17–39 form a C4-type zinc finger; sequence CPDCENEQIIFEKASTVVDCVVC.

It belongs to the eukaryotic ribosomal protein eS27 family. In terms of assembly, part of the 30S ribosomal subunit. It depends on Zn(2+) as a cofactor.

The polypeptide is Small ribosomal subunit protein eS27 (Methanosphaerula palustris (strain ATCC BAA-1556 / DSM 19958 / E1-9c)).